The following is a 299-amino-acid chain: HTH-type transcriptional regulator ArgP (299 aa).

One can recognise an HTH lysR-type domain in the interval 4–60 (PDYRALQALDAVIRERGFERAAQKLCITQSAVSQRIKQLENLFGQPLLVRTVPPQPT). Residues 21–40 (FERAAQKLCITQSAVSQRIK) constitute a DNA-binding region (H-T-H motif).

It belongs to the LysR transcriptional regulatory family. In terms of assembly, homodimer.

Functionally, controls the transcription of genes involved in arginine and lysine metabolism. The protein is HTH-type transcriptional regulator ArgP of Proteus mirabilis (strain HI4320).